The following is a 413-amino-acid chain: Imidazolonepropionase (413 aa).

The Fe(3+) site is built by histidine 77 and histidine 79. Histidine 77 and histidine 79 together coordinate Zn(2+). Positions 86, 149, and 182 each coordinate 4-imidazolone-5-propanoate. Residue tyrosine 149 participates in N-formimidoyl-L-glutamate binding. Histidine 247 contacts Fe(3+). Zn(2+) is bound at residue histidine 247. Glutamine 250 serves as a coordination point for 4-imidazolone-5-propanoate. Aspartate 322 lines the Fe(3+) pocket. Zn(2+) is bound at residue aspartate 322. 2 residues coordinate N-formimidoyl-L-glutamate: asparagine 324 and glycine 326. Threonine 327 contacts 4-imidazolone-5-propanoate.

It belongs to the metallo-dependent hydrolases superfamily. HutI family. The cofactor is Zn(2+). Fe(3+) serves as cofactor.

The protein localises to the cytoplasm. The enzyme catalyses 4-imidazolone-5-propanoate + H2O = N-formimidoyl-L-glutamate. It functions in the pathway amino-acid degradation; L-histidine degradation into L-glutamate; N-formimidoyl-L-glutamate from L-histidine: step 3/3. Functionally, catalyzes the hydrolytic cleavage of the carbon-nitrogen bond in imidazolone-5-propanoate to yield N-formimidoyl-L-glutamate. It is the third step in the universal histidine degradation pathway. In Chromobacterium violaceum (strain ATCC 12472 / DSM 30191 / JCM 1249 / CCUG 213 / NBRC 12614 / NCIMB 9131 / NCTC 9757 / MK), this protein is Imidazolonepropionase.